Consider the following 235-residue polypeptide: Class B acid phosphatase (235 aa).

Positions 1–22 (MKNLLKLSAIAILAASAVSTFA) are cleaved as a signal peptide. The Nucleophile role is filled by D67. 2 residues coordinate Mg(2+): D67 and D69. D69 serves as the catalytic Proton donor. Substrate contacts are provided by residues 135–136 (TG) and K175. D190 serves as a coordination point for Mg(2+).

Belongs to the class B bacterial acid phosphatase family. In terms of assembly, homotetramer. Mg(2+) is required as a cofactor.

It localises to the periplasm. It catalyses the reaction a phosphate monoester + H2O = an alcohol + phosphate. Functionally, dephosphorylates several organic phosphate monoesters. Also has a phosphotransferase activity catalyzing the transfer of low-energy phosphate groups from organic phosphate monoesters to free hydroxyl groups of various organic compounds. This chain is Class B acid phosphatase, found in Haemophilus parainfluenzae (strain T3T1).